A 64-amino-acid polypeptide reads, in one-letter code: uncharacterized protein (64 aa).

The signal sequence occupies residues 1-26 (MVVKENFCGACLTIPLAFAGAGTAIG). Residues 33 to 53 (IKKWSIVITIISLLLTVWFIY) form a helical membrane-spanning segment.

The protein belongs to the IIV-6 010R family.

It localises to the host membrane. This is an uncharacterized protein from Aedes vexans (Inland floodwater mosquito).